The chain runs to 1050 residues: Beta-galactosidase (1050 aa).

Residues Asn100 and Asp199 each contribute to the substrate site. Asp199 lines the Na(+) pocket. Mg(2+)-binding residues include Glu422, His424, and Glu467. Substrate-binding positions include Glu467 and 543–546 (EYAH). The active-site Proton donor is Glu467. Glu543 serves as the catalytic Nucleophile. Mg(2+) is bound at residue Asn603. Na(+) contacts are provided by Phe607 and Asn610. Residues Asn610 and Trp1025 each contribute to the substrate site.

It belongs to the glycosyl hydrolase 2 family. As to quaternary structure, homotetramer. Mg(2+) is required as a cofactor. Requires Na(+) as cofactor.

It catalyses the reaction Hydrolysis of terminal non-reducing beta-D-galactose residues in beta-D-galactosides.. This is Beta-galactosidase from Yersinia pestis bv. Antiqua (strain Angola).